The following is a 90-amino-acid chain: Small ribosomal subunit protein uS15c (90 aa).

Belongs to the universal ribosomal protein uS15 family. Part of the 30S ribosomal subunit.

It localises to the plastid. Its subcellular location is the chloroplast. The chain is Small ribosomal subunit protein uS15c (rps15) from Mesostigma viride (Green alga).